The sequence spans 210 residues: uncharacterized protein (210 aa).

The region spanning 90 to 193 is the Fe2OG dioxygenase domain; that stretch reads KPDQIIVNEY…RISITFRNVI (104 aa).

This is an uncharacterized protein from Acanthamoeba polyphaga (Amoeba).